Reading from the N-terminus, the 650-residue chain is Threonine--tRNA ligase (650 aa).

The TGS domain occupies 1–66 (MVQITLPDGS…EHDAQLAIVT (66 aa)). The segment at 247–538 (DHRKIGRDLD…LIENHAGAMP (292 aa)) is catalytic. Zn(2+) contacts are provided by Cys338, His389, and His515.

The protein belongs to the class-II aminoacyl-tRNA synthetase family. Homodimer. Requires Zn(2+) as cofactor.

The protein resides in the cytoplasm. The catalysed reaction is tRNA(Thr) + L-threonine + ATP = L-threonyl-tRNA(Thr) + AMP + diphosphate + H(+). Functionally, catalyzes the attachment of threonine to tRNA(Thr) in a two-step reaction: L-threonine is first activated by ATP to form Thr-AMP and then transferred to the acceptor end of tRNA(Thr). Also edits incorrectly charged L-seryl-tRNA(Thr). The polypeptide is Threonine--tRNA ligase (Bordetella petrii (strain ATCC BAA-461 / DSM 12804 / CCUG 43448)).